The following is a 438-amino-acid chain: Protein maelstrom 2 (438 aa).

Residues 2 to 69 (APKKRNGFMT…LERTAKKERL (68 aa)) constitute a DNA-binding region (HMG box). The disordered stretch occupies residues 374–438 (KEMGSRDLSP…NMGAGKKIAR (65 aa)). Residues 381–391 (LSPSSSHQSVS) are compositionally biased toward polar residues.

It belongs to the maelstrom family.

The protein localises to the cytoplasm. The protein resides in the nucleus. In terms of biological role, involved both in the piRNA and miRNA metabolic processes. As a component of the meiotic nuage, plays a central role during oogenesis by repressing transposable elements and preventing their mobilization, which is essential for the germline integrity. Repression of transposable elements is mediated via the piRNA metabolic process, which mediates the repression of transposable elements during meiosis by forming complexes composed of piRNAs and Piwi proteins and governs the repression of transposons. As a nuclear component, it is required for proper differentiation in the germline stem cell (GSC) lineage by repressing microRNA-7 (miR-7), thereby acting as an indirect regulator of bag-of-marbles (Bam). Acts by binding to the promoter of miR-7 gene and repressing its expression; miR-7 repression alleviates the Bam repression by miR-7, thereby allowing differentiation in the germline stem cell (GSC) lineage. This Drosophila persimilis (Fruit fly) protein is Protein maelstrom 2 (mael2).